The primary structure comprises 273 residues: Chondrolectin (273 aa).

A signal peptide spans 1 to 21 (MIRIASLLLGAALLCAQGAFA). Topologically, residues 22–216 (RRVVSGQKVC…VVTEAGIIPN (195 aa)) are extracellular. Residues 35-179 (VKHPCYKMAY…CNMKHNYICK (145 aa)) form the C-type lectin domain. 2 disulfides stabilise this stretch: cysteine 61-cysteine 178 and cysteine 144-cysteine 170. An N-linked (GlcNAc...) asparagine glycan is attached at asparagine 86. The helical transmembrane segment at 217 to 237 (LIYVIIPTIPLLLLILVALGT) threads the bilayer. Residues 238–273 (CCFQMLHKSKGRSKTSPNQSTLWISKSTRKESGMEV) lie on the Cytoplasmic side of the membrane. Residues 247–273 (KGRSKTSPNQSTLWISKSTRKESGMEV) form a disordered region. Over residues 251–263 (KTSPNQSTLWISK) the composition is skewed to polar residues.

As to quaternary structure, interacts with RABGGTB. As to expression, in adult mice preferentially expressed in skeletal muscle, testis, brain, and lung. Expressed in striated muscle (at protein level). Expressed in spinal cord. Detected in spinal cord fast motor neurons (at protein level).

The protein localises to the membrane. Its function is as follows. May play a role in the development of the nervous system such as in neurite outgrowth and elongation. May be involved in motor axon growth and guidance. This is Chondrolectin (Chodl) from Mus musculus (Mouse).